A 534-amino-acid chain; its full sequence is CTP synthase (534 aa).

The amidoligase domain stretch occupies residues 1–266 (MKTKFIFVTG…DEQVVEKLNI (266 aa)). Residue S14 coordinates CTP. S14 contributes to the UTP binding site. ATP is bound by residues 15–20 (SIGKGL) and D72. The Mg(2+) site is built by D72 and E140. CTP contacts are provided by residues 147–149 (DIE), 187–192 (KTKPTQ), and K223. Residues 187–192 (KTKPTQ) and K223 each bind UTP. The Glutamine amidotransferase type-1 domain maps to 292–534 (RIAIVGKYVN…IAAALHNIKA (243 aa)). Position 354 (G354) interacts with L-glutamine. Residue C381 is the Nucleophile; for glutamine hydrolysis of the active site. L-glutamine-binding positions include 382-385 (LGMQ), E405, and R462. Residues H507 and E509 contribute to the active site.

Belongs to the CTP synthase family. As to quaternary structure, homotetramer.

The catalysed reaction is UTP + L-glutamine + ATP + H2O = CTP + L-glutamate + ADP + phosphate + 2 H(+). It catalyses the reaction L-glutamine + H2O = L-glutamate + NH4(+). It carries out the reaction UTP + NH4(+) + ATP = CTP + ADP + phosphate + 2 H(+). The protein operates within pyrimidine metabolism; CTP biosynthesis via de novo pathway; CTP from UDP: step 2/2. With respect to regulation, allosterically activated by GTP, when glutamine is the substrate; GTP has no effect on the reaction when ammonia is the substrate. The allosteric effector GTP functions by stabilizing the protein conformation that binds the tetrahedral intermediate(s) formed during glutamine hydrolysis. Inhibited by the product CTP, via allosteric rather than competitive inhibition. Functionally, catalyzes the ATP-dependent amination of UTP to CTP with either L-glutamine or ammonia as the source of nitrogen. Regulates intracellular CTP levels through interactions with the four ribonucleotide triphosphates. The protein is CTP synthase of Geotalea uraniireducens (strain Rf4) (Geobacter uraniireducens).